Reading from the N-terminus, the 219-residue chain is uncharacterized protein (219 aa).

The next 5 membrane-spanning stretches (helical) occupy residues 14–34 (LVYS…FGVL), 37–57 (TLGF…AGAS), 123–143 (FLLG…ALGV), 155–175 (VYSA…LPNL), and 189–209 (VALA…AALA).

The protein belongs to the AzlC family.

The protein localises to the cell membrane. This is an uncharacterized protein from Archaeoglobus fulgidus (strain ATCC 49558 / DSM 4304 / JCM 9628 / NBRC 100126 / VC-16).